The primary structure comprises 315 residues: Methionyl-tRNA formyltransferase (315 aa).

113–116 (SLLP) serves as a coordination point for (6S)-5,6,7,8-tetrahydrofolate.

It belongs to the Fmt family.

The catalysed reaction is L-methionyl-tRNA(fMet) + (6R)-10-formyltetrahydrofolate = N-formyl-L-methionyl-tRNA(fMet) + (6S)-5,6,7,8-tetrahydrofolate + H(+). Attaches a formyl group to the free amino group of methionyl-tRNA(fMet). The formyl group appears to play a dual role in the initiator identity of N-formylmethionyl-tRNA by promoting its recognition by IF2 and preventing the misappropriation of this tRNA by the elongation apparatus. This Pectobacterium carotovorum subsp. carotovorum (strain PC1) protein is Methionyl-tRNA formyltransferase.